The primary structure comprises 691 residues: Elongation factor G (691 aa).

The tr-type G domain maps to 8 to 283; that stretch reads EDYRNIGIMA…AVVDFLPSPL (276 aa). Residues 17-24, 81-85, and 135-138 contribute to the GTP site; these read AHIDAGKT, DTPGH, and NKMD.

Belongs to the TRAFAC class translation factor GTPase superfamily. Classic translation factor GTPase family. EF-G/EF-2 subfamily.

The protein resides in the cytoplasm. In terms of biological role, catalyzes the GTP-dependent ribosomal translocation step during translation elongation. During this step, the ribosome changes from the pre-translocational (PRE) to the post-translocational (POST) state as the newly formed A-site-bound peptidyl-tRNA and P-site-bound deacylated tRNA move to the P and E sites, respectively. Catalyzes the coordinated movement of the two tRNA molecules, the mRNA and conformational changes in the ribosome. This is Elongation factor G from Parvibaculum lavamentivorans (strain DS-1 / DSM 13023 / NCIMB 13966).